We begin with the raw amino-acid sequence, 112 residues long: Iron-sulfur cluster assembly protein CyaY (112 aa).

This sequence belongs to the frataxin family.

Its function is as follows. Involved in iron-sulfur (Fe-S) cluster assembly. May act as a regulator of Fe-S biogenesis. The sequence is that of Iron-sulfur cluster assembly protein CyaY from Janthinobacterium sp. (strain Marseille) (Minibacterium massiliensis).